The primary structure comprises 353 residues: Photosystem II protein D1 (353 aa).

N-acetylthreonine is present on Thr2. Thr2 is subject to Phosphothreonine. 3 helical membrane passes run 29–46 (YIGWFGVLMIPTLLTATS), 118–133 (HFLLGVACYMGREWEL), and 142–156 (WIAVAYSAPVAAATA). His118 contacts chlorophyll a. Tyr126 contacts pheophytin a. The [CaMn4O5] cluster site is built by Asp170 and Glu189. Residues 197-218 (FHMLGVAGVFGGSLFSAMHGSL) traverse the membrane as a helical segment. Chlorophyll a is bound at residue His198. Residues His215 and 264–265 (SF) contribute to the a quinone site. Residue His215 coordinates Fe cation. His272 serves as a coordination point for Fe cation. The chain crosses the membrane as a helical span at residues 274-288 (FLAAWPVIGIWFTAL). His332, Glu333, Asp342, and Ala344 together coordinate [CaMn4O5] cluster. A propeptide spanning residues 345–353 (AVEAPSTNG) is cleaved from the precursor.

The protein belongs to the reaction center PufL/M/PsbA/D family. PSII is composed of 1 copy each of membrane proteins PsbA, PsbB, PsbC, PsbD, PsbE, PsbF, PsbH, PsbI, PsbJ, PsbK, PsbL, PsbM, PsbT, PsbX, PsbY, PsbZ, Psb30/Ycf12, at least 3 peripheral proteins of the oxygen-evolving complex and a large number of cofactors. It forms dimeric complexes. It depends on The D1/D2 heterodimer binds P680, chlorophylls that are the primary electron donor of PSII, and subsequent electron acceptors. It shares a non-heme iron and each subunit binds pheophytin, quinone, additional chlorophylls, carotenoids and lipids. D1 provides most of the ligands for the Mn4-Ca-O5 cluster of the oxygen-evolving complex (OEC). There is also a Cl(-1) ion associated with D1 and D2, which is required for oxygen evolution. The PSII complex binds additional chlorophylls, carotenoids and specific lipids. as a cofactor. In terms of processing, tyr-161 forms a radical intermediate that is referred to as redox-active TyrZ, YZ or Y-Z. Post-translationally, C-terminally processed by CTPA; processing is essential to allow assembly of the oxygen-evolving complex and thus photosynthetic growth.

The protein localises to the plastid. It is found in the chloroplast thylakoid membrane. The catalysed reaction is 2 a plastoquinone + 4 hnu + 2 H2O = 2 a plastoquinol + O2. Photosystem II (PSII) is a light-driven water:plastoquinone oxidoreductase that uses light energy to abstract electrons from H(2)O, generating O(2) and a proton gradient subsequently used for ATP formation. It consists of a core antenna complex that captures photons, and an electron transfer chain that converts photonic excitation into a charge separation. The D1/D2 (PsbA/PsbD) reaction center heterodimer binds P680, the primary electron donor of PSII as well as several subsequent electron acceptors. The polypeptide is Photosystem II protein D1 (Buxus microphylla (Littleleaf boxwood)).